A 210-amino-acid polypeptide reads, in one-letter code: MNVKGASDKAQLAMQAEWEEVLAPEGALAVEEASSVLKISDDERRSYAAYIDNIIQENEIDVVYGHSRGAAIASELESDVQIIGLDGAMVIANDQANFLNIRQDDSEGYGFDRTIAGPYENTVIVKGGAFHKVAVPEGYHTKKPKASQEALERAKARKHNRARHIARAIDRLTARKTDKELEEIYWRERRKKNKNEFSKALIEFIEEQLL.

In Chaetoceros (Chaetoceros sp. DNA virus 7), this protein is Viral protein 1.